The chain runs to 68 residues: Cx9C motif-containing protein 4 (68 aa).

The region spanning 4–46 is the CHCH domain; sequence KDPCQKQACEIQKCLQANSYMESKCQAVIQELRKCCAQYPKGR. 2 consecutive short sequence motifs (cx9C motif) follow at residues 7–17 and 28–38; these read CQKQACEIQKC and CQAVIQELRKC. Disulfide bonds link C7–C38, C17–C28, and C39–C50.

It belongs to the CMC4 family. In terms of tissue distribution, expressed in many tissues with a relatively high level in skeletal muscle.

Its subcellular location is the mitochondrion. The polypeptide is Cx9C motif-containing protein 4 (CMC4) (Homo sapiens (Human)).